Consider the following 1463-residue polypeptide: Probable oxidoreductase PXDNL (1463 aa).

Positions 1-23 are cleaved as a signal peptide; the sequence is MEPRLFCWTTLFLLAGWCLPGLP. The LRRNT domain maps to 24–50; it reads CPSRCLCFKSTVRCMHLMLDHIPQVPQ. 5 LRR repeats span residues 51–72, 75–96, 99–120, 123–144, and 147–168; these read QTTV…AFKK, NLNT…AFEG, NLLY…TFKG, SLEH…TFGD, and RLER…SFSN. One can recognise an LRRCT domain in the interval 180 to 233; it reads NALVCDCDLMWLGELLQGFAQHGHTQAAATCEYPRRLHGRAVASVTVEEFNCQS. Ig-like C2-type domains lie at 234–322, 330–414, 419–504, and 507–596; these read PRIT…AMLR, PSFV…ANII, PQFT…VQLT, and PKAL…MFLT. Disulfide bonds link cysteine 255–cysteine 305, cysteine 351–cysteine 398, cysteine 440–cysteine 488, cysteine 532–cysteine 580, and cysteine 718–cysteine 734. N-linked (GlcNAc...) asparagine glycosylation occurs at asparagine 387. The active-site Proton acceptor is histidine 812. Aspartate 813 is a Ca(2+) binding site. 2 cysteine pairs are disulfide-bonded: cysteine 832–cysteine 842 and cysteine 836–cysteine 859. Ca(2+) is bound by residues threonine 891, tyrosine 893, aspartate 895, and serine 897. Cysteines 944 and 953 form a disulfide. Histidine 1057 contributes to the heme b binding site. Intrachain disulfides connect cysteine 1160/cysteine 1217 and cysteine 1258/cysteine 1284. One can recognise a VWFC domain in the interval 1393–1451; that stretch reads AGCTDVRGVPRKAEERWMKEDCTHCICESGQVTCVVEICPPAPCPSPELVKGTCCPVCR.

Belongs to the peroxidase family. XPO subfamily. In terms of assembly, interacts with PXDN; this interaction inhibits the peroxidase activity of PXDN. The cofactor is heme b. In terms of processing, phosphorylation by SRC on tyrosine residues is required for targeting to polysomes. The 57 kDa isoform PMR1 is the only form detected at protein levels in human cell lines. Expressed in heart.

The protein resides in the secreted. It localises to the endoplasmic reticulum. It is found in the cell membrane. Its subcellular location is the cytoplasm. Probable oxidoreductase. Lacks peroxidase activity. Inhibits the peroxidase activity of PXDN through its interaction. Its function is as follows. Endonuclease selectively degrading some target mRNAs while they are engaged by translating ribosomes, among which albumin and beta-globin mRNAs. This chain is Probable oxidoreductase PXDNL, found in Homo sapiens (Human).